Here is a 420-residue protein sequence, read N- to C-terminus: Glucose-1-phosphate adenylyltransferase (420 aa).

Alpha-D-glucose 1-phosphate contacts are provided by residues Tyr-107, Gly-173, Glu-188 to Lys-189, and Ser-206.

This sequence belongs to the bacterial/plant glucose-1-phosphate adenylyltransferase family. Homotetramer.

It carries out the reaction alpha-D-glucose 1-phosphate + ATP + H(+) = ADP-alpha-D-glucose + diphosphate. The protein operates within glycan biosynthesis; glycogen biosynthesis. In terms of biological role, involved in the biosynthesis of ADP-glucose, a building block required for the elongation reactions to produce glycogen. Catalyzes the reaction between ATP and alpha-D-glucose 1-phosphate (G1P) to produce pyrophosphate and ADP-Glc. The sequence is that of Glucose-1-phosphate adenylyltransferase from Shewanella sp. (strain ANA-3).